Reading from the N-terminus, the 262-residue chain is Phosphatidylglycerol--prolipoprotein diacylglyceryl transferase (262 aa).

Helical transmembrane passes span 9 to 29 (LGPLAIRWYALCIVTGLILAV), 41 to 61 (IIPDDILDFILVAFPLAILGA), 80 to 100 (IFAIWNGGLAIYGGLITGALV), and 109 to 129 (LINTWDFLDIAAPSVMIAQSL). Arg-131 contributes to the a 1,2-diacyl-sn-glycero-3-phospho-(1'-sn-glycerol) binding site. Helical transmembrane passes span 167–187 (QPTFLYESLWNLLGFALILIF), 197–217 (GHITAFYLIWYGFGRMVIEGM), and 227–247 (LRVSQWLSVVLIGLGIMIVIY).

Belongs to the Lgt family.

The protein localises to the cell membrane. It catalyses the reaction L-cysteinyl-[prolipoprotein] + a 1,2-diacyl-sn-glycero-3-phospho-(1'-sn-glycerol) = an S-1,2-diacyl-sn-glyceryl-L-cysteinyl-[prolipoprotein] + sn-glycerol 1-phosphate + H(+). The protein operates within protein modification; lipoprotein biosynthesis (diacylglyceryl transfer). Functionally, catalyzes the transfer of the diacylglyceryl group from phosphatidylglycerol to the sulfhydryl group of the N-terminal cysteine of a prolipoprotein, the first step in the formation of mature lipoproteins. The protein is Phosphatidylglycerol--prolipoprotein diacylglyceryl transferase of Streptococcus pneumoniae (strain JJA).